Here is a 370-residue protein sequence, read N- to C-terminus: 5-hydroxytryptamine receptor 5B (370 aa).

The segment at 1-36 is disordered; it reads MEVSNLSGATPGIAFPPGPESCSDSPSSGRSMGSTP. The Extracellular portion of the chain corresponds to 1-48; it reads MEVSNLSGATPGIAFPPGPESCSDSPSSGRSMGSTPGGLILSGREPPF. N-linked (GlcNAc...) asparagine glycosylation is present at Asn5. Residues 20–36 are compositionally biased toward low complexity; that stretch reads ESCSDSPSSGRSMGSTP. A helical transmembrane segment spans residues 49-75; that stretch reads SAFTVLVVTLLVLLIAATFLWNLLVLV. The Cytoplasmic portion of the chain corresponds to 76–88; the sequence is TILRVRAFHRVPH. Residues 89–115 traverse the membrane as a helical segment; the sequence is NLVASTAVSDVLVAALVMPLSLVSELS. Residues 116–127 are Extracellular-facing; it reads AGRRWQLGRSLC. Cys127 and Cys205 are oxidised to a cystine. A helical transmembrane segment spans residues 128-150; the sequence is HVWISFDVLCCTASIWNVAAIAL. Asp134 contributes to the serotonin binding site. At 151–168 the chain is on the cytoplasmic side; the sequence is DRYWTITRHLQYTLRTRR. The helical transmembrane segment at 169 to 189 threads the bilayer; it reads RASALMIAITWALSALIALAP. At 190-211 the chain is on the extracellular side; that stretch reads LLFGWGEAYDARLQRCQVSQEP. The helical transmembrane segment at 212–233 threads the bilayer; the sequence is SYAVFSTCGAFYVPLAVVLFVY. Topologically, residues 234–300 are cytoplasmic; it reads WKIYKAAKFR…QKEKRAAMMV (67 aa). A helical transmembrane segment spans residues 301–325; sequence GILIGVFVLCWIPFFLTELVSPLCA. The Extracellular portion of the chain corresponds to 326-327; sequence CS. Residues 328–352 form a helical membrane-spanning segment; the sequence is LPPIWKSIFLWLGYSNSFFNPLIYT. The Cytoplasmic segment spans residues 353 to 370; it reads AFNKNYNNAFKSLFTKQR.

This sequence belongs to the G-protein coupled receptor 1 family. Brain; in the CA1 region of hippocampus, the medial habenula, and raphe nuclei.

Its subcellular location is the cell membrane. Functionally, G-protein coupled receptor for 5-hydroxytryptamine (serotonin), a biogenic hormone that functions as a neurotransmitter, a hormone and a mitogen. Also functions as a receptor for ergot alkaloid derivatives and other psychoactive substances. Ligand binding causes a conformation change that triggers signaling via guanine nucleotide-binding proteins (G proteins) and modulates the activity of downstream effectors. Htr5b is coupled to G(i)/G(o) G alpha proteins and mediates inhibitory neurotransmission: signaling inhibits adenylate cyclase activity and activates a phosphatidylinositol-calcium second messenger system that regulates the release of Ca(2+) ions from intracellular stores. This chain is 5-hydroxytryptamine receptor 5B, found in Rattus norvegicus (Rat).